The chain runs to 300 residues: F-box/LRR-repeat protein 15 (300 aa).

Met-1 bears the N-acetylmethionine mark. The region spanning 19–66 is the F-box domain; it reads LLDLPWEDVLLPHVLNWVPLRQLLRLQRVSRAFRALVQLHLARLRRFD. The interaction with SMURF1 stretch occupies residues 113–269; sequence NPQLRSVALA…EPSLSRLRKR (157 aa). 5 LRR repeats span residues 141-162, 167-188, 194-215, 220-241, and 246-267; these read RLQR…RGLA, ALEE…VYLA, GLRS…QELA, QLEH…RTLA, and ALRS…SRLR.

This sequence belongs to the FBXL15 family. Part of the SCF (SKP1-CUL1-F-box) E3 ubiquitin-protein ligase complex SCF(FBXL15) composed of CUL1, SKP1, RBX1 and FBXL15.

The protein resides in the cytoplasm. Its pathway is protein modification; protein ubiquitination. Its function is as follows. Substrate recognition component of a SCF (SKP1-CUL1-F-box protein) E3 ubiquitin-protein ligase complex which mediates the ubiquitination and subsequent proteasomal degradation of SMURF1, thereby acting as a positive regulator of the BMP signaling pathway. Required for dorsal/ventral pattern formation. Also mediates ubiquitination of SMURF2 and WWP2. Required for bone mass maintenance. The protein is F-box/LRR-repeat protein 15 (Fbxl15) of Rattus norvegicus (Rat).